The chain runs to 87 residues: Small ribosomal subunit protein bS20 (87 aa).

Belongs to the bacterial ribosomal protein bS20 family.

Functionally, binds directly to 16S ribosomal RNA. The polypeptide is Small ribosomal subunit protein bS20 (Clostridium botulinum (strain Alaska E43 / Type E3)).